Here is a 492-residue protein sequence, read N- to C-terminus: Aerolysin (492 aa).

The signal sequence occupies residues M1–T21. Cystine bridges form between C42/C98 and C182/C187. An interaction with host N-linked glycan region spans residues W68–Y84. The segment at Y256–W288 is part of the transmembrane beta-barrel after proteolytic activation of the toxin and insertion into the host membrane. Positions R346 to H355 are interaction with glycans from host GPI-anchor. Positions G446–N492 are excised as a propeptide.

This sequence belongs to the aerolysin family. In terms of assembly, homodimer in solution; homoheptamer in the host membrane. After binding to GPI-anchored proteins in target membranes and proteolytic removal of the C-terminal propeptide, the protein assembles into a heptameric pre-pore complex. A further conformation change leads to insertion into the host membrane. In terms of processing, proteolytic cleavage and subsequent release of the propeptide trigger a major conformation change, leading to the formation of a heptameric pre-pore that then inserts into the host membrane.

It is found in the secreted. The protein resides in the host cell membrane. Functionally, secreted, cytolytic toxin that forms pores in host membranes after proteolytic removal of a C-terminal propeptide, leading to destruction of the membrane permeability barrier and cell death. The pores are formed by transmembrane beta-strands and are approximately 3 nm in diameter. In Aeromonas enteropelogenes (Aeromonas trota), this protein is Aerolysin (aerA).